The following is a 610-amino-acid chain: DNA mismatch repair protein MutL (610 aa).

This sequence belongs to the DNA mismatch repair MutL/HexB family.

Its function is as follows. This protein is involved in the repair of mismatches in DNA. It is required for dam-dependent methyl-directed DNA mismatch repair. May act as a 'molecular matchmaker', a protein that promotes the formation of a stable complex between two or more DNA-binding proteins in an ATP-dependent manner without itself being part of a final effector complex. This chain is DNA mismatch repair protein MutL, found in Rickettsia rickettsii (strain Sheila Smith).